Consider the following 241-residue polypeptide: Uridylate kinase (241 aa).

12 to 15 is a binding site for ATP; that stretch reads KLSG. The segment at 20–25 is involved in allosteric activation by GTP; that stretch reads GDKGTG. G54 provides a ligand contact to UMP. Residues G55 and R59 each contribute to the ATP site. Residues D74 and 135–142 each bind UMP; that span reads TGSPYFST. N163, Y169, and D172 together coordinate ATP.

Belongs to the UMP kinase family. In terms of assembly, homohexamer.

The protein localises to the cytoplasm. It carries out the reaction UMP + ATP = UDP + ADP. The protein operates within pyrimidine metabolism; CTP biosynthesis via de novo pathway; UDP from UMP (UMPK route): step 1/1. Allosterically activated by GTP. Inhibited by UTP. Functionally, catalyzes the reversible phosphorylation of UMP to UDP. The protein is Uridylate kinase of Pediococcus pentosaceus (strain ATCC 25745 / CCUG 21536 / LMG 10740 / 183-1w).